Here is a 444-residue protein sequence, read N- to C-terminus: Deoxyguanosinetriphosphate triphosphohydrolase-like protein (444 aa).

The HD domain maps to Arg66–Gly259.

This sequence belongs to the dGTPase family. Type 2 subfamily.

The protein is Deoxyguanosinetriphosphate triphosphohydrolase-like protein of Vibrio campbellii (strain ATCC BAA-1116).